A 202-amino-acid chain; its full sequence is Putative 3-methyladenine DNA glycosylase (202 aa).

Belongs to the DNA glycosylase MPG family.

The chain is Putative 3-methyladenine DNA glycosylase from Rhodopseudomonas palustris (strain BisB5).